The chain runs to 258 residues: Heat-labile enterotoxin A chain (258 aa).

Residues 1-18 (MKNITFIFFILLASPLYA) form the signal peptide. Residue 25–39 (RADSRPPDEIKRSGG) participates in NAD(+) binding. Glu-130 is an active-site residue. Cys-205 and Cys-217 are oxidised to a cystine.

This sequence belongs to the enterotoxin A family. As to quaternary structure, heterohexamer of one A chain and of five B chains.

In terms of biological role, the biological activity of the toxin is produced by the A chain, which activates intracellular adenyl cyclase. The protein is Heat-labile enterotoxin A chain (eltA) of Escherichia coli.